The sequence spans 409 residues: Evolutionarily conserved signaling intermediate in Toll pathway, mitochondrial (409 aa).

The N-terminal 26 residues, 1-26 (MLRRAQCLLRLHGNGGHSLVSRFRNY), are a transit peptide targeting the mitochondrion. Disordered stretches follow at residues 27–53 (ATDE…NLPA) and 383–409 (EEIE…SRQK). A compositionally biased stretch (basic and acidic residues) spans 400-409 (QDEHISSRQK).

It belongs to the ECSIT family. In terms of assembly, interacts with Traf6. Associates with mitochondrial complex I assembly intermediates during its biogenesis.

It localises to the cytoplasm. It is found in the nucleus. Its subcellular location is the mitochondrion. Its function is as follows. As part of the MCIA complex, involved in the assembly of the mitochondrial complex I. Involved in the innate immune response; promotes the production of antibacterial peptides. This Drosophila melanogaster (Fruit fly) protein is Evolutionarily conserved signaling intermediate in Toll pathway, mitochondrial.